The chain runs to 382 residues: ATP phosphoribosyltransferase regulatory subunit (382 aa).

Belongs to the class-II aminoacyl-tRNA synthetase family. HisZ subfamily. Heteromultimer composed of HisG and HisZ subunits.

It localises to the cytoplasm. It functions in the pathway amino-acid biosynthesis; L-histidine biosynthesis; L-histidine from 5-phospho-alpha-D-ribose 1-diphosphate: step 1/9. Functionally, required for the first step of histidine biosynthesis. May allow the feedback regulation of ATP phosphoribosyltransferase activity by histidine. The polypeptide is ATP phosphoribosyltransferase regulatory subunit (Verminephrobacter eiseniae (strain EF01-2)).